A 491-amino-acid polypeptide reads, in one-letter code: Alpha-2-antiplasmin (491 aa).

A signal peptide spans 1–27 (MALLRGLLVLSLSCLQGPCFTFSPVSA). The propeptide occupies 28–39 (VDLPGQQPVSEQ). Cys-70 and Cys-143 form a disulfide bridge. Residues Asn-126, Asn-295, Asn-309, and Asn-316 are each glycosylated (N-linked (GlcNAc...) asparagine). Positions 439–491 (SALPQLQEQRDSPDNRLIGQNDKADFHGGKTFGPDLKLAPRMEEDYPQFSSPK) are disordered. At Tyr-484 the chain carries Sulfotyrosine.

Belongs to the serpin family. Forms protease inhibiting heterodimer with TMPRSS7. Post-translationally, proteolytically cleaved at Pro-35 by both the prolyl endopeptidase FAP form and antiplasmin-cleaving enzyme FAP soluble form to generate mature alpha-2-antiplasmin. In terms of tissue distribution, expressed by the liver and secreted in plasma.

Its subcellular location is the secreted. Functionally, serine protease inhibitor. The major targets of this inhibitor are plasmin and trypsin, but it also inactivates matriptase-3/TMPRSS7 and chymotrypsin. The protein is Alpha-2-antiplasmin (Serpinf2) of Mus musculus (Mouse).